Reading from the N-terminus, the 702-residue chain is Dynein axonemal intermediate chain 1 (702 aa).

The segment at 1 to 58 (MLPASSKMPHKQPPPPRKQSISMGRGARKRDEDSGTEVGEGTDEWVQSKATVKPPDQL) is disordered. 2 positions are modified to phosphoserine: Ser134 and Ser137. 5 WD repeats span residues 383-423 (SSES…SQPS), 432-475 (KHTD…LVHT), 540-580 (AHNM…PMFI), 582-622 (DLNS…YEAI), and 630-669 (KKKN…RKMP).

This sequence belongs to the dynein intermediate chain family. As to quaternary structure, consists of at least two heavy chains and a number of intermediate and light chains. Interacts with BICD2. Interacts with CFAP45 and CFAP52. Interacts with CFAP53.

It is found in the cytoplasm. It localises to the cytoskeleton. The protein resides in the cilium axoneme. In terms of biological role, part of the dynein complex of respiratory cilia. This Bos taurus (Bovine) protein is Dynein axonemal intermediate chain 1 (DNAI1).